A 202-amino-acid polypeptide reads, in one-letter code: Transmembrane 4 L6 family member 4 (202 aa).

Residues 1–9 (MCTGGCARC) are Cytoplasmic-facing. The helical transmembrane segment at 10 to 30 (LGGTLIPLAFFGFLANILLFF) threads the bilayer. The Extracellular segment spans residues 31–45 (PGGKVIDDNDHLSQE). The helical transmembrane segment at 46–66 (IWFFGGILGSGVLMIFPALVF) threads the bilayer. The Cytoplasmic segment spans residues 67-93 (LGLKNNDCCGCCGNEGCGKRFAMFTST). The helical transmembrane segment at 94–114 (IFAVVGFLGAGYSFIISAISI) threads the bilayer. The Extracellular portion of the chain corresponds to 115 to 158 (NKGPKCLMANSTWGYPFHDGDYLNDEALWNKCREPLNVVPWNLT). N124 and N156 each carry an N-linked (GlcNAc...) asparagine glycan. The chain crosses the membrane as a helical span at residues 159-179 (LFSILLVVGGIQMVLCAIQVV). Topologically, residues 180 to 202 (NGLLGTLCGDCQCCGCCGGDGPV) are cytoplasmic.

It belongs to the L6 tetraspanin family. N-glycosylated. Glycosylation is required for the growth inhibitory effect. As to expression, jejunum and liver.

It is found in the membrane. Its function is as follows. Regulates the adhesive and proliferative status of intestinal epithelial cells. Can mediate density-dependent cell proliferation. The chain is Transmembrane 4 L6 family member 4 (TM4SF4) from Homo sapiens (Human).